Consider the following 1097-residue polypeptide: Protease Do-like 7 (1097 aa).

The serine protease stretch occupies residues 55-243 (VLRTTACRAF…LPLQRVVRAL (189 aa)). The region spanning 269–366 (MTFLHKGFDE…RGGQPLSVSV (98 aa)) is the PDZ domain. Residue histidine 524 is the Charge relay system of the active site. Polar residues predominate over residues 546–556 (TSSGDGSQNDF). The tract at residues 546-577 (TSSGDGSQNDFGSEAKKQRVDEDSSDGIAANG) is disordered. The span at 558–567 (SEAKKQRVDE) shows a compositional bias: basic and acidic residues. Serine 785 (charge relay system) is an active-site residue.

The protein belongs to the peptidase S1C family.

Its subcellular location is the cytoplasm. Its function is as follows. Probable serine protease. The chain is Protease Do-like 7 (DEGP7) from Arabidopsis thaliana (Mouse-ear cress).